A 204-amino-acid chain; its full sequence is Pyrrolidone-carboxylate peptidase (204 aa).

Catalysis depends on residues E78, C141, and H165.

Belongs to the peptidase C15 family. Homotetramer.

The protein resides in the cytoplasm. The catalysed reaction is Release of an N-terminal pyroglutamyl group from a polypeptide, the second amino acid generally not being Pro.. Removes 5-oxoproline from various penultimate amino acid residues except L-proline. This is Pyrrolidone-carboxylate peptidase from Levilactobacillus brevis (strain ATCC 367 / BCRC 12310 / CIP 105137 / JCM 1170 / LMG 11437 / NCIMB 947 / NCTC 947) (Lactobacillus brevis).